A 501-amino-acid polypeptide reads, in one-letter code: Ribose import ATP-binding protein RbsA (501 aa).

2 consecutive ABC transporter domains span residues 5–241 (LQLK…VGRK) and 252–495 (APGD…VGKL). 37–44 (GENGAGKS) is a binding site for ATP.

The protein belongs to the ABC transporter superfamily. Ribose importer (TC 3.A.1.2.1) family. The complex is composed of an ATP-binding protein (RbsA), two transmembrane proteins (RbsC) and a solute-binding protein (RbsB).

It is found in the cell inner membrane. It carries out the reaction D-ribose(out) + ATP + H2O = D-ribose(in) + ADP + phosphate + H(+). Part of the ABC transporter complex RbsABC involved in ribose import. Responsible for energy coupling to the transport system. The protein is Ribose import ATP-binding protein RbsA of Shigella sonnei (strain Ss046).